Reading from the N-terminus, the 446-residue chain is MEEKAGLGRLQNQQDEPAQDPHQRAGPRATFHSDRNHPNKEAEAMEGQNPACSRHASSHSIQPQASKPKKHRNYLDGAAVDDLKSLWDRLQTLQQSLTNMPYAEGLKPLKNFASFEELLSMGGDSLLNDLLDIQDSITQCCMKVSKYLNKDGSCASLNYYKQPFIAAVYGPTGCGKSQLLRNLMSAQLIVPAPETVFFITPQVDMIPPQEIAAWETQICEGNFLAGPENTVVPQSGSIMPKFVQMSYAELTNEANYDVTNPTNVFARAASKGPLAIVMDECMEDLGGNRGIAKFFHAFPSKLLDRFPKCTGYSVIVVLHNMNPRRDQGGNIANLKIQAKMHIISPKVHPSQLNRFINIYTKGQPTAISLLLKDIFNYHRLNTNFDWIVYNTEPIDNCMHWLYLSPDEGLIPMYLNIQAKVYQAMERIHRTITDRQRWTRYYHSKKK.

The segment at 1 to 71 (MEEKAGLGRL…QPQASKPKKH (71 aa)) is disordered. The span at 31 to 43 (FHSDRNHPNKEAE) shows a compositional bias: basic and acidic residues. An ATP-binding site is contributed by 170–177 (GPTGCGKS). A DNA-binding region spans residues 439–446 (RYYHSKKK).

It belongs to the adenoviridae packaging protein 1 family. In terms of assembly, homodimer. Part of a genome packaging complex composed of packaging proteins 1, 2 and 3; this complex specifically binds to the packaging sequence on the left end of viral genomic DNA and performs packaging of the viral genome. Interacts with protein 33K.

The protein localises to the virion. Its subcellular location is the host nucleus. The protein resides in the host nucleoplasm. It is found in the host nucleolus. Its function is as follows. Component of the packaging machinery which encapsidates the viral DNA into preformed capsids and transcriptional activator of the viral major late promoter (MLP). Binds, along with packaging proteins 2 and 3, to the specific packaging sequence on the left end of viral genomic DNA and displays ATPase activity thereby providing the power stroke of the packaging machinery. The activity of packaging protein IVa2 is stimulated by protein 33K which acts as a terminase. May be the protein that pumps DNA into the capsid powered by ATP hydrolysis. Specifically binds to the 5'-CG-3' nucleotides of the repeats making up the packaging sequence. Component of the DEF-A and DEF-B transcription factors that bind downstream elements of the major late promoter (MLP), and stimulate transcription from the MLP after initiation of viral DNA replication. DEF-A is a heterodimer packaging proteins 1 and 2 and DEF-B is a homodimer of packaging protein 1. The chain is Packaging protein 1 from Canine adenovirus serotype 2 (strain Toronto A 26-61) (CAdV-2).